The chain runs to 310 residues: AMMECR1-like protein (310 aa).

The segment at 26-95 (LSGSGTHSHG…LSPLPRPNGT (70 aa)) is disordered. Residues 28-66 (GSGTHSHGNQSTTVPGSSSGPLQNHQHVDSSSGRENVSD) show a composition bias toward polar residues. The residue at position 74 (Ser-74) is a Phosphoserine. The region spanning 97–291 (NTTKNLVVTA…ISYAEYIASR (195 aa)) is the AMMECR1 domain.

In Homo sapiens (Human), this protein is AMMECR1-like protein (AMMECR1L).